Consider the following 374-residue polypeptide: Chaperone protein DnaJ (374 aa).

In terms of domain architecture, J spans 4 to 68 (DYYDILGVSR…QMRGRYDQFG (65 aa)). The segment at 133–215 (GGEQQIRISH…CGGRGQNQVS (83 aa)) adopts a CR-type zinc-finger fold. Zn(2+) contacts are provided by cysteine 146, cysteine 149, cysteine 163, cysteine 166, cysteine 189, cysteine 192, cysteine 203, and cysteine 206. 4 CXXCXGXG motif repeats span residues 146 to 153 (CKTCEGTG), 163 to 170 (CSTCQGSG), 189 to 196 (CPTCNGQG), and 203 to 210 (CDSCGGRG).

The protein belongs to the DnaJ family. Homodimer. It depends on Zn(2+) as a cofactor.

Its subcellular location is the cytoplasm. Its function is as follows. Participates actively in the response to hyperosmotic and heat shock by preventing the aggregation of stress-denatured proteins and by disaggregating proteins, also in an autonomous, DnaK-independent fashion. Unfolded proteins bind initially to DnaJ; upon interaction with the DnaJ-bound protein, DnaK hydrolyzes its bound ATP, resulting in the formation of a stable complex. GrpE releases ADP from DnaK; ATP binding to DnaK triggers the release of the substrate protein, thus completing the reaction cycle. Several rounds of ATP-dependent interactions between DnaJ, DnaK and GrpE are required for fully efficient folding. Also involved, together with DnaK and GrpE, in the DNA replication of plasmids through activation of initiation proteins. This Acaryochloris marina (strain MBIC 11017) protein is Chaperone protein DnaJ.